Here is a 91-residue protein sequence, read N- to C-terminus: Small ribosomal subunit protein uS15c (91 aa).

The protein belongs to the universal ribosomal protein uS15 family. Part of the 30S ribosomal subunit.

The protein resides in the plastid. It localises to the chloroplast. The sequence is that of Small ribosomal subunit protein uS15c (rps15) from Cicer arietinum (Chickpea).